Here is a 184-residue protein sequence, read N- to C-terminus: Nucleoside triphosphate pyrophosphatase (184 aa).

Aspartate 66 acts as the Proton acceptor in catalysis.

Belongs to the Maf family. Requires a divalent metal cation as cofactor.

It localises to the cytoplasm. The enzyme catalyses a ribonucleoside 5'-triphosphate + H2O = a ribonucleoside 5'-phosphate + diphosphate + H(+). It carries out the reaction a 2'-deoxyribonucleoside 5'-triphosphate + H2O = a 2'-deoxyribonucleoside 5'-phosphate + diphosphate + H(+). In terms of biological role, nucleoside triphosphate pyrophosphatase. May have a dual role in cell division arrest and in preventing the incorporation of modified nucleotides into cellular nucleic acids. In Prochlorococcus marinus (strain MIT 9313), this protein is Nucleoside triphosphate pyrophosphatase.